The primary structure comprises 168 residues: Cell division inhibitor SulA (168 aa).

Residues 106 to 112 (ALLTGNY) form a ftsZ binding region. Residues 161–168 (KIHSYLYH) are lon protease binding.

It belongs to the SulA family. Interacts with FtsZ. In terms of processing, is rapidly cleaved and degraded by the Lon protease once DNA damage is repaired.

Functionally, component of the SOS system and an inhibitor of cell division. Accumulation of SulA causes rapid cessation of cell division and the appearance of long, non-septate filaments. In the presence of GTP, binds a polymerization-competent form of FtsZ in a 1:1 ratio, thus inhibiting FtsZ polymerization and therefore preventing it from participating in the assembly of the Z ring. This mechanism prevents the premature segregation of damaged DNA to daughter cells during cell division. The chain is Cell division inhibitor SulA from Yersinia pestis bv. Antiqua (strain Antiqua).